The chain runs to 1006 residues: SAC3 family protein A (1006 aa).

7 disordered regions span residues 1–75, 106–162, 183–239, 266–326, 516–550, 595–638, and 650–690; these read MNHG…GPAT, TPYQ…PGSY, GYQS…TIAT, GTEK…AVST, TVTT…RWEP, GFKP…SDKD, and AGSA…GNLH. 2 stretches are compositionally biased toward polar residues: residues 26 to 75 and 106 to 115; these read GSQT…GPAT and TPYQTSSDPH. Over residues 116–140 the composition is skewed to low complexity; the sequence is NYSNTGYSNYYSGYQQQPSQSYPQP. The segment covering 144 to 162 has biased composition (polar residues); it reads YQNTGAPQPLSSFQNPGSY. 2 stretches are compositionally biased toward polar residues: residues 269–282 and 313–326; these read KLST…SQSF and SHPP…AVST. The span at 516-539 shows a compositional bias: low complexity; that stretch reads TVTTTNVTNSESSSAQLSSLQNKS. Over residues 609–618 the composition is skewed to basic residues; the sequence is SFQRPVKRQR. The span at 653 to 680 shows a compositional bias: basic and acidic residues; the sequence is AEEKKRRDSRSKRFEKIQGHSRGNDLTK. The region spanning 804-978 is the PCI domain; it reads DLPEYNQCLS…DMLLDTKATS (175 aa).

This sequence belongs to the SAC3 family. As to quaternary structure, interacts with EER5, SAC3B and CML20.

The protein localises to the nucleus. In terms of biological role, component of the TREX-2 complex (transcription and export complex 2), a muliprotein complex that functions in docking export-competent ribonucleoprotein particles (mRNPs) to the nuclear entrance of the nuclear pore complex (nuclear basket). TREX-2 participates in mRNA export and accurate chromatin positioning in the nucleus by tethering genes to the nuclear periphery. This Arabidopsis thaliana (Mouse-ear cress) protein is SAC3 family protein A.